The following is an 89-amino-acid chain: Large ribosomal subunit protein bL27 (89 aa).

The interval 1 to 24 is disordered; sequence MAHKKGTGSTRNGRDSNSKRLGVK.

Belongs to the bacterial ribosomal protein bL27 family.

This is Large ribosomal subunit protein bL27 from Synechococcus sp. (strain WH7803).